Here is a 391-residue protein sequence, read N- to C-terminus: Acetyl-CoA acetyltransferase (391 aa).

The active-site Acyl-thioester intermediate is Cys88. Active-site proton acceptor residues include His347 and Cys377.

Belongs to the thiolase-like superfamily. Thiolase family. In terms of assembly, homotetramer.

Its subcellular location is the cytoplasm. The catalysed reaction is 2 acetyl-CoA = acetoacetyl-CoA + CoA. The protein operates within metabolic intermediate biosynthesis; (R)-mevalonate biosynthesis; (R)-mevalonate from acetyl-CoA: step 1/3. The protein is Acetyl-CoA acetyltransferase (phaA) of Paracoccus denitrificans.